Reading from the N-terminus, the 850-residue chain is DEAD-box ATP-dependent RNA helicase 26 (850 aa).

Disordered stretches follow at residues 60-82 (TRPE…IRAS) and 106-350 (GKFT…ENDE). The segment covering 61–71 (RPERSQPEFAR) has biased composition (basic and acidic residues). Threonine 109 is subject to Phosphothreonine. Position 110 is a phosphoserine (serine 110). 2 stretches are compositionally biased toward basic and acidic residues: residues 118 to 140 (EVVR…EGQS) and 284 to 299 (GRND…REPG). Composition is skewed to acidic residues over residues 315–325 (LEEEDSSDDDE) and 336–350 (LPSE…ENDE). The Q motif motif lies at 382-410 (TRFDQFPLSPLSLKAIKDAGFETMTVVQE). The 184-residue stretch at 413 to 596 (LPIILQGKDV…HVALKRDHEF (184 aa)) folds into the Helicase ATP-binding domain. 426 to 433 (AKTGTGKT) contacts ATP. Residues 544–547 (DEAD) carry the DEAD box motif. In terms of domain architecture, Helicase C-terminal spans 630–777 (LLKEHIADNV…IDPEAVKRVQ (148 aa)).

This sequence belongs to the DEAD box helicase family.

The catalysed reaction is ATP + H2O = ADP + phosphate + H(+). In Arabidopsis thaliana (Mouse-ear cress), this protein is DEAD-box ATP-dependent RNA helicase 26 (RH26).